A 34-amino-acid polypeptide reads, in one-letter code: MATALTSAEVFVALVVAAHAAVLALRLSISLYEA.

A helical membrane pass occupies residues 10-32 (VFVALVVAAHAAVLALRLSISLY).

The protein belongs to the PsaM family.

It is found in the cellular thylakoid membrane. The sequence is that of Photosystem I reaction center subunit XII from Parasynechococcus marenigrum (strain WH8102).